A 385-amino-acid chain; its full sequence is MDQCLQVAWIAGSDAITEQSNFIFSPMCLRAGLALLATGADGETLRQMLAFLGSEHIHQLNATSAGLLAEMQAWPQLVFAAGIFVDRSLRLRPEFKSTAAAAHGGIHAICGLPEPDHEGALNQRHPPWHLEQRHDVRPCERHALQGEVGSDVRVVEHHAGNVPPPRRHDGAGAVPVGPRDALRRQGAKFEFHGLEFKVLQLFYKMVGRDGQVDFGFGAPCFCMLVFLPIKRDGLRHLLRMAVTEPDFVTRCVPRSRQIVTPCKVPKFKFSSQLDAGGALAQLGLGAPFDPDAADLSRMAVNTPPAGLYVSTMRQKCAVEVDEEGTTAVEAMYSPSSPGYSPGYQPPRPPPMSFVAEHPFMFAIVEYKKAQVLFLGHVMDPSKEDQ.

The segment at 324 to 348 (GTTAVEAMYSPSSPGYSPGYQPPRP) is RCL.

It belongs to the serpin family.

The chain is Putative non-inhibitory serpin-Z11 from Oryza sativa subsp. japonica (Rice).